The sequence spans 1489 residues: ABC transporter FUM19 (1489 aa).

The next 10 helical transmembrane spans lie at 33 to 53, 84 to 104, 116 to 136, 143 to 163, 264 to 284, 302 to 322, 373 to 393, 397 to 417, 482 to 502, and 511 to 531; these read IIFFIAPSCVFTALTFVRIFV, CFSSSQVLGLVAGMTTAALSY, LLSIYLFLSLLLDIAHDRTLW, LEYGFSSVFSAAVAIKAFAVW, LLLPVLPRIALIGLSLAQAFL, WGLIGATVLIYGGISICTSLY, FLNLHELWANIVEAGLAAWFL, VGIAFIAPIGLVLLSFLGVSI, IASLIIAFAPDLTAPGIMLAA, and HKVYTAIALLTLLTVPLGSIF. The ABC transmembrane type-1 1 domain occupies 272 to 539; sequence IALIGLSLAQ…IFRSVSPLMS (268 aa). Residues 591–823 enclose the ABC transporter 1 domain; it reads VKVIQASFGW…YQSHLQSLCI (233 aa). Residues N612 and N616 are each glycosylated (N-linked (GlcNAc...) asparagine). 625–632 provides a ligand contact to ATP; the sequence is GPVGSGKS. N670 carries N-linked (GlcNAc...) asparagine glycosylation. The segment covering 852-862 has biased composition (basic and acidic residues); the sequence is EQTRSSRRGAD. Residues 852 to 874 are disordered; it reads EQTRSSRRGADNQETIASGADSS. Residues 863-874 show a composition bias toward polar residues; it reads NQETIASGADSS. 6 consecutive transmembrane segments (helical) span residues 890-910, 945-965, 977-999, 1031-1051, 1120-1140, and 1149-1169; these read AVPPVAIISFVTSSLSYGFLY, ILALLSELLTMYLALTYFALI, AITRAPLYFFASVDLGTITNYFS, AASSPYLAASYPLCFFLLYFV, WLLFILNTFVSLLALFTVALV, and GFAGAGLISLMQIGQFLTNVV. Positions 902 to 1187 constitute an ABC transmembrane type-1 2 domain; sequence SSLSYGFLYS…SMGAVSRLKA (286 aa). In terms of domain architecture, ABC transporter 2 spans 1214–1485; it reads IKIDGVSASY…KEGKFRALWE (272 aa). 1254–1261 contacts ATP; sequence GRTGSGKS.

It belongs to the ABC transporter superfamily. ABCC family. Conjugate transporter (TC 3.A.1.208) subfamily.

The protein resides in the cell membrane. Its function is as follows. ABC transporter that may provide the dual role of fumonisin export and self-protection by allowing the fungus to evade the harmful effect of its own fumonisin production. Plays a role in the repression of the gene cluster that mediates fumonisin biosynthesis. In Gibberella moniliformis (strain M3125 / FGSC 7600) (Maize ear and stalk rot fungus), this protein is ABC transporter FUM19.